Reading from the N-terminus, the 242-residue chain is MVPWLEPGEPFPDTRLALTDPDGLLAAGSDLSPDTLLRAYSTGIFPWYDAESQPILWWSPAPRCVIQLEQLHVSRSLARHLRRADFTVTFDRAFETVMRTCAAPRQDEAGTWISEDMLAAYCRLHELGYAHSVEIWQNGALAGCLYGIQLGQMFFGESMASPQRNGSKVALVALRNFARKLDIQLLDAQIENPHLMSMGAEMMPRSAFEAHLQRWIPSQPAPSHWPGDRFDWPDLQAAHQAF.

The protein belongs to the L/F-transferase family.

It localises to the cytoplasm. It carries out the reaction N-terminal L-lysyl-[protein] + L-leucyl-tRNA(Leu) = N-terminal L-leucyl-L-lysyl-[protein] + tRNA(Leu) + H(+). The catalysed reaction is N-terminal L-arginyl-[protein] + L-leucyl-tRNA(Leu) = N-terminal L-leucyl-L-arginyl-[protein] + tRNA(Leu) + H(+). It catalyses the reaction L-phenylalanyl-tRNA(Phe) + an N-terminal L-alpha-aminoacyl-[protein] = an N-terminal L-phenylalanyl-L-alpha-aminoacyl-[protein] + tRNA(Phe). Its function is as follows. Functions in the N-end rule pathway of protein degradation where it conjugates Leu, Phe and, less efficiently, Met from aminoacyl-tRNAs to the N-termini of proteins containing an N-terminal arginine or lysine. The polypeptide is Leucyl/phenylalanyl-tRNA--protein transferase (Alcanivorax borkumensis (strain ATCC 700651 / DSM 11573 / NCIMB 13689 / SK2)).